The chain runs to 536 residues: CTP synthase (536 aa).

An amidoligase domain region spans residues 1-267; that stretch reads MSKFVFVTGG…CKETLKYLDL (267 aa). Ser13 serves as a coordination point for CTP. Ser13 lines the UTP pocket. Residues 14–19 and Asp71 each bind ATP; that span reads SIGKGI. Asp71 and Glu141 together coordinate Mg(2+). CTP is bound by residues 148 to 150, 188 to 193, and Lys224; these read DIE and KTKPTQ. UTP contacts are provided by residues 188–193 and Lys224; that span reads KTKPTQ. In terms of domain architecture, Glutamine amidotransferase type-1 spans 292 to 534; the sequence is KVALVGKYIE…IKASQDKLTQ (243 aa). Residue Gly354 coordinates L-glutamine. Cys381 acts as the Nucleophile; for glutamine hydrolysis in catalysis. L-glutamine contacts are provided by residues 382 to 385, Glu405, and Arg462; that span reads LGMQ. Catalysis depends on residues His507 and Glu509.

The protein belongs to the CTP synthase family. As to quaternary structure, homotetramer.

The catalysed reaction is UTP + L-glutamine + ATP + H2O = CTP + L-glutamate + ADP + phosphate + 2 H(+). The enzyme catalyses L-glutamine + H2O = L-glutamate + NH4(+). It carries out the reaction UTP + NH4(+) + ATP = CTP + ADP + phosphate + 2 H(+). It participates in pyrimidine metabolism; CTP biosynthesis via de novo pathway; CTP from UDP: step 2/2. With respect to regulation, allosterically activated by GTP, when glutamine is the substrate; GTP has no effect on the reaction when ammonia is the substrate. The allosteric effector GTP functions by stabilizing the protein conformation that binds the tetrahedral intermediate(s) formed during glutamine hydrolysis. Inhibited by the product CTP, via allosteric rather than competitive inhibition. Catalyzes the ATP-dependent amination of UTP to CTP with either L-glutamine or ammonia as the source of nitrogen. Regulates intracellular CTP levels through interactions with the four ribonucleotide triphosphates. The polypeptide is CTP synthase (Prochlorococcus marinus (strain AS9601)).